Here is a 331-residue protein sequence, read N- to C-terminus: Probable cytosolic iron-sulfur protein assembly protein Ciao1 (331 aa).

WD repeat units lie at residues 12-51 (GHKGRIWGVAWHPKGNSFASCGEDKAIRIWSLSGNTWTTK), 57-96 (GHKRTIREVRWSPCGEYLASASFDATTAIWSKHECTATLE), 97-136 (GHENEVKSVSWSRSGGLLATCSRDKSVWIWEVAGDDEFEC), 142-181 (AHSQDVKRVVWHPTKEVLASASYDNTIKMFAESALDSDWD), 188-227 (SHTSTVWSIDFDADGERLVSCSDDATLKIWRAYHPGNDAG), 246-285 (EHSRAIYDVSWCKQTGLIASACGDDGIRIFKECSDSKRDA), and 297-331 (AHEQDVNAVEWNPVTAGQLISCSDDGTIKIWKLQE).

The protein belongs to the WD repeat CIA1 family.

Its function is as follows. Essential component of the cytosolic iron-sulfur (Fe/S) protein assembly machinery. Required for the maturation of extramitochondrial Fe/S proteins. The polypeptide is Probable cytosolic iron-sulfur protein assembly protein Ciao1 (Drosophila virilis (Fruit fly)).